Reading from the N-terminus, the 485-residue chain is Adenosylhomocysteinase (485 aa).

Substrate contacts are provided by Thr-64, Asp-139, and Glu-205. 206-208 (TTT) contributes to the NAD(+) binding site. Residues Lys-235 and Asp-239 each coordinate substrate. Residues Asn-240, 269–274 (GYGDVG), Glu-292, Asn-327, 348–350 (IGH), and Asn-397 each bind NAD(+).

It belongs to the adenosylhomocysteinase family. In terms of assembly, homotetramer. NAD(+) serves as cofactor. Mainly in floral buds and stems.

The catalysed reaction is S-adenosyl-L-homocysteine + H2O = L-homocysteine + adenosine. It participates in amino-acid biosynthesis; L-homocysteine biosynthesis; L-homocysteine from S-adenosyl-L-homocysteine: step 1/1. Functionally, adenosylhomocysteine is a competitive inhibitor of S-adenosyl-L-methionine-dependent methyl transferase reactions; therefore adenosylhomocysteinase may play a key role in the control of methylations via regulation of the intracellular concentration of adenosylhomocysteine. This is Adenosylhomocysteinase (SAHH) from Petroselinum crispum (Parsley).